The sequence spans 267 residues: WUSCHEL-related homeobox 8 (267 aa).

Positions 88 to 152 (TARQRWTPTP…NRRARSKRKQ (65 aa)) form a DNA-binding region, homeobox; WUS-type. A disordered region spans residues 148–195 (SKRKQAALPNNNAESEAEADEESPTDKKPKSDRPLHQNIAMRDHNSER). The segment covering 171–195 (PTDKKPKSDRPLHQNIAMRDHNSER) has biased composition (basic and acidic residues).

This sequence belongs to the WUS homeobox family.

It localises to the nucleus. Functionally, transcription factor which may be involved in developmental processes. This Oryza sativa subsp. japonica (Rice) protein is WUSCHEL-related homeobox 8 (WOX8).